We begin with the raw amino-acid sequence, 225 residues long: NAD(P)H-quinone oxidoreductase subunit K, chloroplastic (225 aa).

The [4Fe-4S] cluster site is built by Cys43, Cys44, Cys108, and Cys139.

This sequence belongs to the complex I 20 kDa subunit family. NDH is composed of at least 16 different subunits, 5 of which are encoded in the nucleus. It depends on [4Fe-4S] cluster as a cofactor.

Its subcellular location is the plastid. The protein localises to the chloroplast thylakoid membrane. The enzyme catalyses a plastoquinone + NADH + (n+1) H(+)(in) = a plastoquinol + NAD(+) + n H(+)(out). The catalysed reaction is a plastoquinone + NADPH + (n+1) H(+)(in) = a plastoquinol + NADP(+) + n H(+)(out). In terms of biological role, NDH shuttles electrons from NAD(P)H:plastoquinone, via FMN and iron-sulfur (Fe-S) centers, to quinones in the photosynthetic chain and possibly in a chloroplast respiratory chain. The immediate electron acceptor for the enzyme in this species is believed to be plastoquinone. Couples the redox reaction to proton translocation, and thus conserves the redox energy in a proton gradient. This is NAD(P)H-quinone oxidoreductase subunit K, chloroplastic from Capsella bursa-pastoris (Shepherd's purse).